We begin with the raw amino-acid sequence, 161 residues long: Phosphopantetheine adenylyltransferase (161 aa).

Ser-9 contacts substrate. ATP is bound by residues 9–10 (SF) and His-17. Positions 41, 73, and 87 each coordinate substrate. ATP-binding positions include 88–90 (GLR), Glu-98, and 122–128 (YSFVSSS).

Belongs to the bacterial CoaD family. As to quaternary structure, homohexamer. Mg(2+) is required as a cofactor.

The protein resides in the cytoplasm. It carries out the reaction (R)-4'-phosphopantetheine + ATP + H(+) = 3'-dephospho-CoA + diphosphate. It functions in the pathway cofactor biosynthesis; coenzyme A biosynthesis; CoA from (R)-pantothenate: step 4/5. In terms of biological role, reversibly transfers an adenylyl group from ATP to 4'-phosphopantetheine, yielding dephospho-CoA (dPCoA) and pyrophosphate. The sequence is that of Phosphopantetheine adenylyltransferase from Mycobacteroides abscessus (strain ATCC 19977 / DSM 44196 / CCUG 20993 / CIP 104536 / JCM 13569 / NCTC 13031 / TMC 1543 / L948) (Mycobacterium abscessus).